Consider the following 71-residue polypeptide: Exodeoxyribonuclease 7 small subunit (71 aa).

It belongs to the XseB family. As to quaternary structure, heterooligomer composed of large and small subunits.

Its subcellular location is the cytoplasm. It catalyses the reaction Exonucleolytic cleavage in either 5'- to 3'- or 3'- to 5'-direction to yield nucleoside 5'-phosphates.. In terms of biological role, bidirectionally degrades single-stranded DNA into large acid-insoluble oligonucleotides, which are then degraded further into small acid-soluble oligonucleotides. The sequence is that of Exodeoxyribonuclease 7 small subunit from Streptococcus agalactiae serotype Ia (strain ATCC 27591 / A909 / CDC SS700).